Reading from the N-terminus, the 610-residue chain is UvrABC system protein C (610 aa).

A GIY-YIG domain is found at serine 16 to valine 94. The UVR domain maps to glutamine 204 to valine 239.

This sequence belongs to the UvrC family. Interacts with UvrB in an incision complex.

It is found in the cytoplasm. Its function is as follows. The UvrABC repair system catalyzes the recognition and processing of DNA lesions. UvrC both incises the 5' and 3' sides of the lesion. The N-terminal half is responsible for the 3' incision and the C-terminal half is responsible for the 5' incision. The protein is UvrABC system protein C of Serratia proteamaculans (strain 568).